The following is a 369-amino-acid chain: IST1-like protein (369 aa).

Residues 12–59 (KLKVQLKLAVSRIQILKNKKANIVRDEKRNVAELLRKKNEESARIRVE) are a coiled coil. Residues 224–354 (QIIQQQQQPQ…SSDTGYPDYD (131 aa)) form a disordered region. 2 stretches are compositionally biased toward low complexity: residues 225 to 239 (IIQQ…SFPI) and 246 to 270 (PTFS…SPQF). Polar residues predominate over residues 277-305 (FYNNNSGNQTPQFPTISTNNSDGYSNDKF). Low complexity predominate over residues 306–337 (NNGNNNYNNNNNNNNNNNNNNNHNNNNNNNNN).

It belongs to the IST1 family.

The polypeptide is IST1-like protein (Dictyostelium discoideum (Social amoeba)).